The chain runs to 489 residues: DNA-dependent metalloprotease SPRTN (489 aa).

N-acetylmethionine is present on methionine 1. The SprT-like domain occupies 45 to 212 (LQALFVQFND…KTCGGTYIKI (168 aa)). Residue histidine 111 participates in Zn(2+) binding. Residue glutamate 112 is part of the active site. The Zn(2+) site is built by histidine 115 and histidine 130. Lysine 230 carries the post-translational modification N6-acetyllysine. An SHP-box motif is present at residues 253–261 (FSGKGYVLG). Serine 268 bears the Phosphoserine mark. Lysine 303 is covalently cross-linked (Glycyl lysine isopeptide (Lys-Gly) (interchain with G-Cter in SUMO2)). The PIP-box signature appears at 325-332 (QNVLSNYF). Lysine 341 participates in a covalent cross-link: Glycyl lysine isopeptide (Lys-Gly) (interchain with G-Cter in SUMO2); alternate. Residue lysine 341 forms a Glycyl lysine isopeptide (Lys-Gly) (interchain with G-Cter in ubiquitin); alternate linkage. The tract at residues 357–409 (GNIPKNSVSSSSQRRVSSSKISLRNSSKVTESASVMPSQDVSGSEDTFPNKRP) is disordered. Residue lysine 361 forms a Glycyl lysine isopeptide (Lys-Gly) (interchain with G-Cter in SUMO2) linkage. Positions 363-383 (SVSSSSQRRVSSSKISLRNSS) are enriched in low complexity. Residues serine 373 and serine 374 each carry the phosphoserine; by CHEK1 modification. Lysine 376 participates in a covalent cross-link: Glycyl lysine isopeptide (Lys-Gly) (interchain with G-Cter in SUMO2); alternate. A Glycyl lysine isopeptide (Lys-Gly) (interchain with G-Cter in ubiquitin); alternate cross-link involves residue lysine 376. Serine 383 carries the phosphoserine; by CHEK1 modification. Positions 384 to 403 (KVTESASVMPSQDVSGSEDT) are enriched in polar residues. A Nuclear localization signal motif is present at residues 402-413 (DTFPNKRPRLED). Lysine 414 participates in a covalent cross-link: Glycyl lysine isopeptide (Lys-Gly) (interchain with G-Cter in ubiquitin). Glycyl lysine isopeptide (Lys-Gly) (interchain with G-Cter in SUMO2) cross-links involve residues lysine 423 and lysine 424. The segment at 428 to 453 (KSSGNDPKYSTTTAQNSSSSSSQSKM) is disordered. A Glycyl lysine isopeptide (Lys-Gly) (interchain with G-Cter in ubiquitin) cross-link involves residue lysine 435. A compositionally biased stretch (low complexity) spans 437–451 (STTTAQNSSSSSSQS). A UBZ4-type zinc finger spans residues 453–480 (MVNCPVCQNEVLESQINEHLDWCLEGDS). Zn(2+) contacts are provided by cysteine 456, cysteine 459, histidine 471, and cysteine 475. Lysine 484 participates in a covalent cross-link: Glycyl lysine isopeptide (Lys-Gly) (interchain with G-Cter in SUMO2).

Belongs to the Spartan family. Homodimer. Interacts (VIA PIP-box) with PCNA (when ubiquitinated). Interacts (via its SHP-box) with VCP/p97. Interacts with RAD18. Interacts with KCTD13 and POLD3. Requires Zn(2+) as cofactor. In terms of processing, autocatalytically cleaved in response to double-stranded DNA-binding: autocatalytic cleavage takes place in trans and leads to inactivation. Monoubiquitinated; monoubiquitination promotes exclusion from chromatin. Deubiquitinated by VCPIP1: deubiquitination is required for subsequent acetylation and recruitment to chromatin and DNA damage sites. Post-translationally, acetylated following deubiquitination by VCPIP1, leading to recruitment to chromatin and DNA damage sites. In terms of processing, phosphorylation by CHEK1 promotes recruitment to chromatin.

Its subcellular location is the nucleus. The protein resides in the chromosome. With respect to regulation, DNA-binding activates the protease activity: single-stranded DNA-binding specifically activates ability to cleave covalent DNA-protein cross-links (DPCs). In contrast, double-stranded DNA-binding specifically activates autocatalytic cleavage, and subsequent inactivation. DNA-dependent metalloendopeptidase that mediates the proteolytic cleavage of covalent DNA-protein cross-links (DPCs) during DNA synthesis, thereby playing a key role in maintaining genomic integrity. DPCs are highly toxic DNA lesions that interfere with essential chromatin transactions, such as replication and transcription, and which are induced by reactive agents, such as UV light or formaldehyde. Associates with the DNA replication machinery and specifically removes DPCs during DNA synthesis. Catalyzes proteolytic cleavage of the HMCES DNA-protein cross-link following unfolding by the BRIP1/FANCJ helicase. Acts as a pleiotropic protease for DNA-binding proteins cross-linked with DNA, such as TOP1, TOP2A, histones H3 and H4. Mediates degradation of DPCs that are not ubiquitinated, while it is not able to degrade ubiquitinated DPCs. SPRTN activation requires polymerase collision with DPCs followed by helicase bypass of DPCs. Involved in recruitment of VCP/p97 to sites of DNA damage. Also acts as an activator of CHEK1 during normal DNA replication by mediating proteolytic cleavage of CHEK1, thereby promoting CHEK1 removal from chromatin and subsequent activation. Does not activate CHEK1 in response to DNA damage. May also act as a 'reader' of ubiquitinated PCNA: recruited to sites of UV damage and interacts with ubiquitinated PCNA and RAD18, the E3 ubiquitin ligase that monoubiquitinates PCNA. Facilitates chromatin association of RAD18 and is required for efficient PCNA monoubiquitination, promoting a feed-forward loop to enhance PCNA ubiquitination and translesion DNA synthesis. The polypeptide is DNA-dependent metalloprotease SPRTN (Homo sapiens (Human)).